The following is a 562-amino-acid chain: Glucose-6-phosphate isomerase (562 aa).

Glutamate 370 functions as the Proton donor in the catalytic mechanism. Residues histidine 401 and lysine 526 contribute to the active site.

Belongs to the GPI family.

Its subcellular location is the cytoplasm. It carries out the reaction alpha-D-glucose 6-phosphate = beta-D-fructose 6-phosphate. It participates in carbohydrate biosynthesis; gluconeogenesis. The protein operates within carbohydrate degradation; glycolysis; D-glyceraldehyde 3-phosphate and glycerone phosphate from D-glucose: step 2/4. Functionally, catalyzes the reversible isomerization of glucose-6-phosphate to fructose-6-phosphate. This chain is Glucose-6-phosphate isomerase, found in Deinococcus geothermalis (strain DSM 11300 / CIP 105573 / AG-3a).